A 462-amino-acid chain; its full sequence is L-seryl-tRNA(Sec) selenium transferase (462 aa).

Lysine 294 is subject to N6-(pyridoxal phosphate)lysine.

The protein belongs to the SelA family. In terms of assembly, homodecamer; pentamer of dimers. Binds only one seryl-tRNA(Sec) per dimer. Pyridoxal 5'-phosphate serves as cofactor.

Its subcellular location is the cytoplasm. The enzyme catalyses L-seryl-tRNA(Sec) + selenophosphate + H(+) = L-selenocysteinyl-tRNA(Sec) + phosphate. The protein operates within aminoacyl-tRNA biosynthesis; selenocysteinyl-tRNA(Sec) biosynthesis; selenocysteinyl-tRNA(Sec) from L-seryl-tRNA(Sec) (bacterial route): step 1/1. Its function is as follows. Converts seryl-tRNA(Sec) to selenocysteinyl-tRNA(Sec) required for selenoprotein biosynthesis. This Yersinia pestis bv. Antiqua (strain Antiqua) protein is L-seryl-tRNA(Sec) selenium transferase.